The following is a 183-amino-acid chain: Fetal and adult testis-expressed transcript protein (183 aa).

Residues 42 to 66 (SRSRGASQKKQKLEQKAAGSASAKR) are disordered. Residues 163–181 (TLIIAVLVSASIANLWLWM) traverse the membrane as a helical segment.

In terms of assembly, interacts with BIK and RNF183. Interacts with IMMT/MIC60and EMD. In terms of tissue distribution, testis-specific in fetus (aged from 6 to 11 weeks). In adult, expressed predominantly in testis, with some expression in lung, heart, kidney, adrenal gland and whole brain. Highly expressed in certain types of cancer tissues such as hepatocellular carcinoma, colon and gastric cancer. Weakly expressed in normal pancreas.

It localises to the mitochondrion. The protein resides in the mitochondrion outer membrane. Its subcellular location is the endoplasmic reticulum membrane. Its function is as follows. Involved in the regulation of endoplasmic reticulum (ER)-mitochondria coupling. Negatively regulates the ER-mitochondria distance and Ca(2+) transfer from ER to mitochondria possibly implicating it in the regulation of apoptosis. May collaborate with RNF183 to restrain BIK protein levels thus regulating apoptotic signaling. This Homo sapiens (Human) protein is Fetal and adult testis-expressed transcript protein (FATE1).